We begin with the raw amino-acid sequence, 408 residues long: LL-diaminopimelate aminotransferase (408 aa).

Positions 15 and 42 each coordinate substrate. Pyridoxal 5'-phosphate contacts are provided by residues Y72, 108–109 (SK), Y132, N187, Y218, and 246–248 (SFS). Substrate-binding residues include K109, Y132, and N187. N6-(pyridoxal phosphate)lysine is present on K249. Residues R257 and N292 each contribute to the pyridoxal 5'-phosphate site. Substrate contacts are provided by N292 and R388.

Belongs to the class-I pyridoxal-phosphate-dependent aminotransferase family. LL-diaminopimelate aminotransferase subfamily. In terms of assembly, homodimer. Requires pyridoxal 5'-phosphate as cofactor.

The enzyme catalyses (2S,6S)-2,6-diaminopimelate + 2-oxoglutarate = (S)-2,3,4,5-tetrahydrodipicolinate + L-glutamate + H2O + H(+). It participates in amino-acid biosynthesis; L-lysine biosynthesis via DAP pathway; LL-2,6-diaminopimelate from (S)-tetrahydrodipicolinate (aminotransferase route): step 1/1. Functionally, involved in the synthesis of meso-diaminopimelate (m-DAP or DL-DAP), required for both lysine and peptidoglycan biosynthesis. Catalyzes the direct conversion of tetrahydrodipicolinate to LL-diaminopimelate. The protein is LL-diaminopimelate aminotransferase of Prochlorococcus marinus (strain MIT 9301).